Reading from the N-terminus, the 511-residue chain is GMP synthase [glutamine-hydrolyzing] (511 aa).

In terms of domain architecture, Glutamine amidotransferase type-1 spans 5 to 195 (DILVLDFGSQ…AKYACNCDSV (191 aa)). Catalysis depends on Cys-82, which acts as the Nucleophile. Active-site residues include His-169 and Glu-171. The 191-residue stretch at 196 to 386 (WNMGSFAKTQ…LGLSKDVVYR (191 aa)) folds into the GMPS ATP-PPase domain. Position 223-229 (223-229 (SGGVDSS)) interacts with ATP.

As to quaternary structure, homodimer.

It catalyses the reaction XMP + L-glutamine + ATP + H2O = GMP + L-glutamate + AMP + diphosphate + 2 H(+). It functions in the pathway purine metabolism; GMP biosynthesis; GMP from XMP (L-Gln route): step 1/1. Catalyzes the synthesis of GMP from XMP. In Campylobacter lari (strain RM2100 / D67 / ATCC BAA-1060), this protein is GMP synthase [glutamine-hydrolyzing].